Reading from the N-terminus, the 411-residue chain is Secretion apparatus protein BsaZ (411 aa).

4 helical membrane-spanning segments follow: residues 28 to 48 (IVALIVIATGALAAPALVDLT), 80 to 100 (IAAPFVLLCAAAGALPSLVQS), 137 to 157 (ALLYVGVFALTVRVFADLYHA), and 175 to 195 (IVLTVRLVLLFLLCALPVLIL). Residues 341-411 (AANRGGPPPE…APARTGDQNA (71 aa)) are disordered. The span at 370 to 404 (DACADNAFPDDAPPGAAAPNAGSPDSPAPDGGAPA) shows a compositional bias: low complexity.

This sequence belongs to the type III secretion exporter family.

Its subcellular location is the cell membrane. Its function is as follows. Part of the bsa type III secretion system, is involved in the intracellular replication of invading bacteria inside the host cell. Probably necessary for the lysis of the vacuole membrane and escape into the host cell cytoplasm. The protein is Secretion apparatus protein BsaZ (bsaZ) of Burkholderia pseudomallei (strain 1106a).